A 341-amino-acid chain; its full sequence is Holliday junction branch migration complex subunit RuvB (341 aa).

The large ATPase domain (RuvB-L) stretch occupies residues 1–180 (MAKSHTLNPE…FGIQLRLDYY (180 aa)). Residues Leu19, Arg20, Gly61, Lys64, Thr65, Thr66, Arg170, Tyr180, and Arg217 each contribute to the ATP site. Thr65 provides a ligand contact to Mg(2+). A small ATPAse domain (RuvB-S) region spans residues 181–251 (NDEEMKQIVL…LCLKAFEKMG (71 aa)). Positions 254 to 341 (DLGLDGMDRQ…VHHGQDPTLF (88 aa)) are head domain (RuvB-H). DNA is bound by residues Arg309 and Arg314.

Belongs to the RuvB family. As to quaternary structure, homohexamer. Forms an RuvA(8)-RuvB(12)-Holliday junction (HJ) complex. HJ DNA is sandwiched between 2 RuvA tetramers; dsDNA enters through RuvA and exits via RuvB. An RuvB hexamer assembles on each DNA strand where it exits the tetramer. Each RuvB hexamer is contacted by two RuvA subunits (via domain III) on 2 adjacent RuvB subunits; this complex drives branch migration. In the full resolvosome a probable DNA-RuvA(4)-RuvB(12)-RuvC(2) complex forms which resolves the HJ.

The protein resides in the cytoplasm. The enzyme catalyses ATP + H2O = ADP + phosphate + H(+). The RuvA-RuvB-RuvC complex processes Holliday junction (HJ) DNA during genetic recombination and DNA repair, while the RuvA-RuvB complex plays an important role in the rescue of blocked DNA replication forks via replication fork reversal (RFR). RuvA specifically binds to HJ cruciform DNA, conferring on it an open structure. The RuvB hexamer acts as an ATP-dependent pump, pulling dsDNA into and through the RuvAB complex. RuvB forms 2 homohexamers on either side of HJ DNA bound by 1 or 2 RuvA tetramers; 4 subunits per hexamer contact DNA at a time. Coordinated motions by a converter formed by DNA-disengaged RuvB subunits stimulates ATP hydrolysis and nucleotide exchange. Immobilization of the converter enables RuvB to convert the ATP-contained energy into a lever motion, pulling 2 nucleotides of DNA out of the RuvA tetramer per ATP hydrolyzed, thus driving DNA branch migration. The RuvB motors rotate together with the DNA substrate, which together with the progressing nucleotide cycle form the mechanistic basis for DNA recombination by continuous HJ branch migration. Branch migration allows RuvC to scan DNA until it finds its consensus sequence, where it cleaves and resolves cruciform DNA. The protein is Holliday junction branch migration complex subunit RuvB of Leptospira interrogans serogroup Icterohaemorrhagiae serovar copenhageni (strain Fiocruz L1-130).